A 209-amino-acid polypeptide reads, in one-letter code: MTYCNKSNQTSYPFILPDLPYEKESFKPHFTLETFDYHHGKHHNTYVQNLNNLLKDKEELQKKDLEEIIEWSSQNSNAAIFNNAAQIWNHTFFWHSIKPQGGGKPSGKILEQINKDFGSFEEFCEQFKQEAVGQFGSGWAWLIYHDNRLQIIKTANAGTPIAHGMKPLLACDVWEHAYYIDYRNKRPDYVDIFIKHMINWKFVEDNLIK.

Fe(3+)-binding residues include His-38, His-90, Asp-172, and His-176. Mn(2+)-binding residues include His-38, His-90, Asp-172, and His-176.

The protein belongs to the iron/manganese superoxide dismutase family. It depends on Mn(2+) as a cofactor. The cofactor is Fe(3+).

The enzyme catalyses 2 superoxide + 2 H(+) = H2O2 + O2. In terms of biological role, destroys superoxide anion radicals which are normally produced within the cells and which are toxic to biological systems. Catalyzes the dismutation of superoxide anion radicals into O2 and H2O2 by successive reduction and oxidation of the transition metal ion at the active site. The chain is Superoxide dismutase [Mn/Fe] (sodB) from Rickettsia conorii (strain ATCC VR-613 / Malish 7).